The sequence spans 349 residues: UPF0324 inner membrane protein YeiH (349 aa).

Residues 1 to 12 lie on the Periplasmic side of the membrane; it reads MTNITLQKQHRT. Residues 13–32 traverse the membrane as a helical segment; it reads LWHFIPGLALSAVITGVALW. At 33 to 35 the chain is on the cytoplasmic side; sequence GGS. Residues 36–58 form a helical membrane-spanning segment; sequence IPAVAGAGFSALTLAILLGMVLG. The Periplasmic segment spans residues 59–99; it reads NTIYPHIWKSCDGGVLFAKQYLLRLGIILYGFRLTFSQIAD. The chain crosses the membrane as a helical span at residues 100-122; it reads VGISGIIIDVLTLSSTFLLACFL. The Cytoplasmic segment spans residues 123-131; the sequence is GQKVFGLDK. The chain crosses the membrane as a helical span at residues 132 to 151; it reads HTSWLIGAGSSICGAAAVLA. Residues 152 to 162 are Periplasmic-facing; the sequence is TEPVVKAEASK. Residues 163–185 form a helical membrane-spanning segment; it reads VTVAVATVVIFGTVAIFLYPAIY. Topologically, residues 186–261 are cytoplasmic; the sequence is PLMSQWFSPE…SGTNSGEKSK (76 aa). A helical transmembrane segment spans residues 262 to 283; the sequence is ITIPWFAILFIVVAIFNSFHLL. At 284 to 289 the chain is on the periplasmic side; the sequence is PQSVVN. Residues 290 to 312 traverse the membrane as a helical segment; it reads MLVTLDTFLLAMAMAALGLTTHV. The Cytoplasmic portion of the chain corresponds to 313-321; the sequence is SALKKAGAK. Residues 322-344 form a helical membrane-spanning segment; that stretch reads PLLMALVLFAWLIVGGGAINYVI. At 345-349 the chain is on the periplasmic side; sequence QSVIA.

Belongs to the UPF0324 family.

The protein localises to the cell inner membrane. This is UPF0324 inner membrane protein YeiH (yeiH) from Escherichia coli O6:H1 (strain CFT073 / ATCC 700928 / UPEC).